A 207-amino-acid chain; its full sequence is Large ribosomal subunit protein bL25 (207 aa).

The disordered stretch occupies residues Asp185 to Ser207.

The protein belongs to the bacterial ribosomal protein bL25 family. CTC subfamily. As to quaternary structure, part of the 50S ribosomal subunit; part of the 5S rRNA/L5/L18/L25 subcomplex. Contacts the 5S rRNA. Binds to the 5S rRNA independently of L5 and L18.

In terms of biological role, this is one of the proteins that binds to the 5S RNA in the ribosome where it forms part of the central protuberance. The chain is Large ribosomal subunit protein bL25 from Rhodococcus jostii (strain RHA1).